Reading from the N-terminus, the 142-residue chain is Large ribosomal subunit protein uL13 (142 aa).

It belongs to the universal ribosomal protein uL13 family. Part of the 50S ribosomal subunit.

Functionally, this protein is one of the early assembly proteins of the 50S ribosomal subunit, although it is not seen to bind rRNA by itself. It is important during the early stages of 50S assembly. The protein is Large ribosomal subunit protein uL13 of Paraburkholderia phytofirmans (strain DSM 17436 / LMG 22146 / PsJN) (Burkholderia phytofirmans).